Here is a 147-residue protein sequence, read N- to C-terminus: Mineralocorticoid receptor (147 aa).

The region spanning 1–147 (FALSWRSYKH…SQALKVEFPA (147 aa)) is the NR LBD domain. 2 residues coordinate 21-hydroxyprogesterone: R6 and T134. R6 and T134 together coordinate aldosterone. Residues R6 and T134 each coordinate progesterone.

The protein belongs to the nuclear hormone receptor family. NR3 subfamily.

It is found in the cytoplasm. The protein resides in the nucleus. Functionally, receptor for both mineralocorticoids (MC) such as aldosterone and glucocorticoids (GC) such as corticosterone or cortisol. Binds to mineralocorticoid response elements (MRE) and transactivates target genes. The effect of MC is to increase ion and water transport and thus raise extracellular fluid volume and blood pressure and lower potassium levels. This is Mineralocorticoid receptor (NR3C2) from Gallus gallus (Chicken).